Reading from the N-terminus, the 481-residue chain is Ankyrin repeat, SAM and basic leucine zipper domain-containing protein 1 (481 aa).

The segment covering 1-16 (MASGGLRGLAVAGGGE) has biased composition (gly residues). The tract at residues 1-23 (MASGGLRGLAVAGGGESSDSEDD) is disordered. A phosphoserine mark is found at serine 17, serine 18, and serine 20. 6 ANK repeats span residues 45–74 (EKNE…SVDS), 78–107 (YGWT…NASF), 110–144 (DKQT…DPNV), 148–177 (RLMT…EVNT), 181–210 (NGYT…NKML), and 214–243 (DGKI…PLEG). One can recognise an SAM domain in the interval 272-334 (SYTAFGDLEI…KILSALKELE (63 aa)).

Interacts with DDX4, PIWIL1, RANBP9 and TDRD1.

The protein resides in the cytoplasm. Functionally, plays a central role during spermatogenesis by repressing transposable elements and preventing their mobilization, which is essential for the germline integrity. Acts via the piRNA metabolic process, which mediates the repression of transposable elements during meiosis by forming complexes composed of piRNAs and Piwi proteins and governs the methylation and subsequent repression of transposons. Its association with pi-bodies suggests a participation in the primary piRNAs metabolic process. Required prior to the pachytene stage to facilitate the production of multiple types of piRNAs, including those associated with repeats involved in the regulation of retrotransposons. May act by mediating protein-protein interactions during germ cell maturation. The polypeptide is Ankyrin repeat, SAM and basic leucine zipper domain-containing protein 1 (ASZ1) (Microcebus murinus (Gray mouse lemur)).